Here is a 462-residue protein sequence, read N- to C-terminus: Argininosuccinate lyase (462 aa).

The protein belongs to the lyase 1 family. Argininosuccinate lyase subfamily.

The protein resides in the cytoplasm. It catalyses the reaction 2-(N(omega)-L-arginino)succinate = fumarate + L-arginine. The protein operates within amino-acid biosynthesis; L-arginine biosynthesis; L-arginine from L-ornithine and carbamoyl phosphate: step 3/3. The chain is Argininosuccinate lyase from Nitratiruptor sp. (strain SB155-2).